The following is a 140-amino-acid chain: MAVERTLSIVKPDATRRNLTGKINARFEEAGLRIVAQKRIRLTREQAEQFYIVHAERPFYGELVSFMISGPVVVQVLEGENAVARNREIMGATNPANAAPGTIRKDFAESIEANSVHGSDSLENAATEIAYFFSGTEIVG.

The ATP site is built by Lys-11, Phe-59, Arg-87, Thr-93, Arg-104, and Asn-114. Catalysis depends on His-117, which acts as the Pros-phosphohistidine intermediate.

This sequence belongs to the NDK family. In terms of assembly, homotetramer. It depends on Mg(2+) as a cofactor.

It localises to the cytoplasm. The catalysed reaction is a 2'-deoxyribonucleoside 5'-diphosphate + ATP = a 2'-deoxyribonucleoside 5'-triphosphate + ADP. It carries out the reaction a ribonucleoside 5'-diphosphate + ATP = a ribonucleoside 5'-triphosphate + ADP. Its function is as follows. Major role in the synthesis of nucleoside triphosphates other than ATP. The ATP gamma phosphate is transferred to the NDP beta phosphate via a ping-pong mechanism, using a phosphorylated active-site intermediate. The chain is Nucleoside diphosphate kinase from Rhodospirillum centenum (strain ATCC 51521 / SW).